Here is a 222-residue protein sequence, read N- to C-terminus: Large ribosomal subunit protein uL4 (222 aa).

Belongs to the universal ribosomal protein uL4 family. As to quaternary structure, part of the 50S ribosomal subunit.

Functionally, one of the primary rRNA binding proteins, this protein initially binds near the 5'-end of the 23S rRNA. It is important during the early stages of 50S assembly. It makes multiple contacts with different domains of the 23S rRNA in the assembled 50S subunit and ribosome. Forms part of the polypeptide exit tunnel. The protein is Large ribosomal subunit protein uL4 of Acidobacterium capsulatum (strain ATCC 51196 / DSM 11244 / BCRC 80197 / JCM 7670 / NBRC 15755 / NCIMB 13165 / 161).